The sequence spans 253 residues: Phycoerythrobilin:ferredoxin oxidoreductase (253 aa).

Belongs to the HY2 family.

It carries out the reaction (3Z)-phycoerythrobilin + oxidized 2[4Fe-4S]-[ferredoxin] = 15,16-dihydrobiliverdin + reduced 2[4Fe-4S]-[ferredoxin] + 2 H(+). Functionally, catalyzes the two-electron reduction of the C2 and C3(1) diene system of 15,16-dihydrobiliverdin. The protein is Phycoerythrobilin:ferredoxin oxidoreductase of Prochlorococcus marinus (strain AS9601).